Here is a 190-residue protein sequence, read N- to C-terminus: dCTP deaminase, dUMP-forming (190 aa).

DCTP-binding positions include 101–106, aspartate 119, 127–129, glutamine 148, tyrosine 162, and glutamine 174; these read KSSLGR and TLE. The active-site Proton donor/acceptor is glutamate 129. A disordered region spans residues 163 to 190; the sequence is GSTRVGSKYQGQRGPTPSRSYQNFITST. Residues 171–190 are compositionally biased toward polar residues; that stretch reads YQGQRGPTPSRSYQNFITST.

This sequence belongs to the dCTP deaminase family. In terms of assembly, homotrimer.

It carries out the reaction dCTP + 2 H2O = dUMP + NH4(+) + diphosphate. Its pathway is pyrimidine metabolism; dUMP biosynthesis; dUMP from dCTP: step 1/1. Its function is as follows. Bifunctional enzyme that catalyzes both the deamination of dCTP to dUTP and the hydrolysis of dUTP to dUMP without releasing the toxic dUTP intermediate. In Mycobacterium avium (strain 104), this protein is dCTP deaminase, dUMP-forming.